Consider the following 344-residue polypeptide: Treponemal membrane protein A (344 aa).

The first 21 residues, 1–21 (MKLKSLVFSLSALFLVLGFTG), serve as a signal peptide directing secretion. A lipid anchor (N-palmitoyl cysteine) is attached at C22. Residue C22 is the site of S-diacylglycerol cysteine attachment. The interval 257 to 344 (AAKTKQELSA…TEEPIEGGVQ (88 aa)) is disordered. Residues 260–277 (TKQELSAKLANEADKESP) are compositionally biased toward basic and acidic residues. Composition is skewed to acidic residues over residues 312–322 (VPVEEMNENSS) and 335–344 (TEEPIEGGVQ).

The protein to T.pallidum TmpA.

The protein resides in the cell membrane. This Treponema phagedenis protein is Treponemal membrane protein A (tmpA).